A 566-amino-acid chain; its full sequence is Glucose starvation modulator protein 1 (566 aa).

Positions 20 to 48 form a DNA-binding region, zn(2)-C6 fungal-type; that stretch reads CVFCHQKHLQCSNERPCKNCVKRNIAHGC. Disordered regions lie at residues 65–93 and 250–270; these read PGAV…PMDS and KQAS…NTLS. The span at 83-93 shows a compositional bias: polar residues; sequence PVSTSVSPMDS. Low complexity predominate over residues 253-270; sequence SPSPSNTSTSENNTNTLS.

The protein belongs to the ERT1/acuK family.

It localises to the nucleus. Transcription factor which regulates nonfermentable carbon utilization. This is Glucose starvation modulator protein 1 (ZCF23) from Candida albicans (strain SC5314 / ATCC MYA-2876) (Yeast).